The sequence spans 434 residues: Adenylosuccinate synthetase (434 aa).

Residues 22-28 (GDEGKGK) and 50-52 (GHT) each bind GTP. The Proton acceptor role is filled by Asp-23. Mg(2+)-binding residues include Asp-23 and Gly-50. IMP-binding positions include 23–26 (DEGK), 48–51 (NAGH), Thr-139, Arg-153, Gln-234, Thr-249, and Arg-313. His-51 serves as the catalytic Proton donor. 309–315 (ATTGRKR) provides a ligand contact to substrate. GTP-binding positions include Arg-315, 341 to 343 (KLD), and 423 to 425 (SVG).

It belongs to the adenylosuccinate synthetase family. As to quaternary structure, homodimer. Requires Mg(2+) as cofactor.

The protein resides in the cytoplasm. It carries out the reaction IMP + L-aspartate + GTP = N(6)-(1,2-dicarboxyethyl)-AMP + GDP + phosphate + 2 H(+). It participates in purine metabolism; AMP biosynthesis via de novo pathway; AMP from IMP: step 1/2. Plays an important role in the de novo pathway of purine nucleotide biosynthesis. Catalyzes the first committed step in the biosynthesis of AMP from IMP. The polypeptide is Adenylosuccinate synthetase (Chlorobium chlorochromatii (strain CaD3)).